A 163-amino-acid chain; its full sequence is NADH-quinone oxidoreductase subunit I (163 aa).

4Fe-4S ferredoxin-type domains are found at residues 53-83 (LRRYPNGEERCIACKLCEAICPAQAITIEAG) and 94-123 (VRYDIDMVKCIYCGFCQEACPVEAIVEGPN). Residues cysteine 63, cysteine 66, cysteine 69, cysteine 73, cysteine 103, cysteine 106, cysteine 109, and cysteine 113 each coordinate [4Fe-4S] cluster.

It belongs to the complex I 23 kDa subunit family. As to quaternary structure, NDH-1 is composed of 14 different subunits. Subunits NuoA, H, J, K, L, M, N constitute the membrane sector of the complex. [4Fe-4S] cluster serves as cofactor.

Its subcellular location is the cell inner membrane. It carries out the reaction a quinone + NADH + 5 H(+)(in) = a quinol + NAD(+) + 4 H(+)(out). Its function is as follows. NDH-1 shuttles electrons from NADH, via FMN and iron-sulfur (Fe-S) centers, to quinones in the respiratory chain. The immediate electron acceptor for the enzyme in this species is believed to be ubiquinone. Couples the redox reaction to proton translocation (for every two electrons transferred, four hydrogen ions are translocated across the cytoplasmic membrane), and thus conserves the redox energy in a proton gradient. The chain is NADH-quinone oxidoreductase subunit I from Bartonella bacilliformis (strain ATCC 35685 / KC583 / Herrer 020/F12,63).